The sequence spans 617 residues: RNA polymerase sigma factor RpoD (617 aa).

Residues 192 to 222 (NITNDSNENEDENEDENEDEDENSIDPELAN) form a disordered region. The span at 198 to 216 (NENEDENEDENEDEDENSI) shows a compositional bias: acidic residues. Residues 383-453 (MVEANLRLVI…TRSIADQART (71 aa)) form a sigma-70 factor domain-2 region. The Interaction with polymerase core subunit RpoC signature appears at 407-410 (DLIQ). Positions 462–538 (ETINKLNRIS…DTTLELPLDS (77 aa)) are sigma-70 factor domain-3. The segment at 551-604 (VLSGLTAREAKVLRMRFGIDMNTDHTLEEVGKQFDVTRERIRQIEAKALRKLRH) is sigma-70 factor domain-4. A DNA-binding region (H-T-H motif) is located at residues 577 to 596 (LEEVGKQFDVTRERIRQIEA).

This sequence belongs to the sigma-70 factor family. RpoD/SigA subfamily. As to quaternary structure, interacts transiently with the RNA polymerase catalytic core.

Its subcellular location is the cytoplasm. In terms of biological role, sigma factors are initiation factors that promote the attachment of RNA polymerase to specific initiation sites and are then released. This sigma factor is the primary sigma factor during exponential growth. The polypeptide is RNA polymerase sigma factor RpoD (Buchnera aphidicola subsp. Schizaphis graminum (strain Sg)).